Here is a 366-residue protein sequence, read N- to C-terminus: MAKSPKRKNSEPEDLSSNKRSKSFEFGKVENGLEPSGSDFGSDLPTPFDTMVTEQPLALPKASSPTTNLASPRNSSTPNLKTTSTTSKQSQKAEQKKNAGGSTGSTTASTTKPQQSDPDKLSDALLSAGVDIREEEALLSSTVARTKATGISANNQVPSHPPFLHPKNISDFMKRIASEQNFHQDFNKNTDILGLMSTACELYMRDVITNSLILSIHRRKGVKLNTGRRSEVSRSLRDLALRQKTQEERRVQRRIALGLEKQTTDARLDTEETQYRASNATANLMIAGGNKKKYSWLTAGSKSSSTDLKNQGNVSSAVAARGEMGIKYREAREEPGIVMRDLLLALENRRVGVNNVITKGYARIRD.

Residues 1–121 form a disordered region; the sequence is MAKSPKRKNS…KPQQSDPDKL (121 aa). Positions 63–80 are enriched in polar residues; the sequence is SSPTTNLASPRNSSTPNL. Residues 81-90 are compositionally biased toward low complexity; that stretch reads KTTSTTSKQS. The Histone-fold domain occupies 170–238; it reads SDFMKRIASE…RSEVSRSLRD (69 aa).

This sequence belongs to the TAF4 family. As to quaternary structure, the 1.2 MDa TFIID complex is composed of TATA binding protein (TBP) and the 14 TBP-associated factors.

It is found in the nucleus. In terms of biological role, functions as a component of the DNA-binding general transcription factor complex TFIID. Binding of TFIID to a promoter (with or without TATA element) is the initial step in pre-initiation complex (PIC) formation. TFIID plays a key role in the regulation of gene expression by RNA polymerase II through different activities such as transcription activator interaction, core promoter recognition and selectivity, TFIIA and TFIIB interaction, chromatin modification (histone acetylation by TAF1), facilitation of DNA opening and initiation of transcription. The polypeptide is Transcription initiation factor TFIID subunit 4 (TAF4) (Kluyveromyces lactis (strain ATCC 8585 / CBS 2359 / DSM 70799 / NBRC 1267 / NRRL Y-1140 / WM37) (Yeast)).